The primary structure comprises 428 residues: Cyclic AMP-responsive element-binding protein 3-like protein 3-A (428 aa).

Residues M1–Q286 lie on the Cytoplasmic side of the membrane. Positions V67–S83 are enriched in low complexity. The disordered stretch occupies residues V67–P104. Positions S93–E103 are enriched in pro residues. Residues I210–L273 form the bZIP domain. The basic motif stretch occupies residues K212–R241. Positions L252 to L273 are leucine-zipper. A helical; Signal-anchor for type II membrane protein membrane pass occupies residues A287 to L303. Residues P304–M428 lie on the Lumenal side of the membrane. Positions T381–M428 are disordered. The segment covering P385–D402 has biased composition (basic and acidic residues). An N-linked (GlcNAc...) asparagine glycan is attached at N389.

It belongs to the bZIP family. ATF subfamily. Binds DNA as a dimer. Post-translationally, controlled by regulated intramembrane proteolysis (RIP). A fragment containing the cytoplasmic transcription factor domain is released by proteolysis. The cleavage seems to be performed sequentially by site-1 and site-2 proteases.

The protein resides in the endoplasmic reticulum membrane. The protein localises to the nucleus. In terms of biological role, transcriptional activator. Binds the cAMP response element (CRE). Activates transcription through box-B element and CRE. Seems to function synergistically with atf6. Regulates FGF21 transcription. The polypeptide is Cyclic AMP-responsive element-binding protein 3-like protein 3-A (creb3l3a) (Danio rerio (Zebrafish)).